A 307-amino-acid polypeptide reads, in one-letter code: Leucine-rich repeat-containing protein 59 (307 aa).

Methionine 1 carries the post-translational modification N-acetylmethionine. Threonine 2 is modified (N-acetylthreonine; in Leucine-rich repeat-containing protein 59, N-terminally processed). Over 2 to 244 the chain is Cytoplasmic; that stretch reads TKAGSKGGNL…KPPPRKHTRS (243 aa). LRR repeat units follow at residues 10–31, 40–62, 63–84, 86–107, and 109–128; these read NLRDKLDGNELDLSLSDLNEVP, KATVLDLSCNKLSTLPSDFCGLT, HLVKLDLSKNKLQQLPADFGRL, NLQHLDLLNNRLVTLPVSFAQL, and NLKWLDLKDNPLDPVLAKVA. Residues serine 23 and serine 25 each carry the phosphoserine modification. Residue lysine 73 is modified to N6-succinyllysine. Position 135 is an N6-acetyllysine (lysine 135). Positions 148-216 form a coiled coil; sequence MKAVQADQER…KASKREQEKK (69 aa). Residues 150–241 are disordered; it reads AVQADQERER…RPRKPPPRKH (92 aa). The span at 154-221 shows a compositional bias: basic and acidic residues; the sequence is DQERERQRRL…EQEKKPKKEA (68 aa). Basic residues predominate over residues 229–241; that stretch reads SGSRPRKPPPRKH. A helical membrane pass occupies residues 245–265; sequence WAVLKVLLLLLLLCVAGGLVV. Residues 266-307 are Lumenal-facing; it reads CRVTGLHQQPLCTSVNTIYDNAVQGLRHHEILQWVLQTDSQQ.

In terms of assembly, can form homodimers. Interacts with SGO1. Interacts with FGF1.

Its subcellular location is the microsome membrane. It localises to the endoplasmic reticulum membrane. The protein localises to the nucleus envelope. Functionally, required for nuclear import of FGF1, but not that of FGF2. Might regulate nuclear import of exogenous FGF1 by facilitating interaction with the nuclear import machinery and by transporting cytosolic FGF1 to, and possibly through, the nuclear pores. The chain is Leucine-rich repeat-containing protein 59 (Lrrc59) from Mus musculus (Mouse).